Here is a 239-residue protein sequence, read N- to C-terminus: MAGDQELELRFDVPLYTLAEASRYLVVPRATLATWADGYERRPANAPAVQGQPIITALPHPTGSHARLPFVGIAEAYVLNAFRRAGVPMQRIRPSLDWLIKNVGPHALASQDLCTDGAEVLWRFAERSGEGSPDDLVVRGLIVPRSGQYVFKEIVEHYLQQISFADDNLASMIRLPQYGDANVVLDPRRGYGQPVFDGSGVRVADVLGPLRAGATFQAVADDYGVTPDQLRDALDAIAA.

Its function is as follows. Possibly the antitoxin component of a type II toxin-antitoxin (TA) system. Its cognate toxin is VapC45. The polypeptide is Putative antitoxin VapB45 (Mycobacterium tuberculosis (strain ATCC 25618 / H37Rv)).